We begin with the raw amino-acid sequence, 115 residues long: Type 3 secretion system chaperone PscG (115 aa).

It belongs to the YscG family. Forms a stable heterotrimeric complex with PscE and PscF/SctF in the cytoplasm. Co-stabilized by PscE.

The protein localises to the cytoplasm. In terms of biological role, chaperone of the type III secretion system (T3SS), also called injectisome, which is used to inject bacterial effector proteins into eukaryotic host cells, facilitating the establishment and dissemination of infection. Along with PscE, prevents premature polymerization of the PscF/SctF needle protein within the cytoplasm. Required for type III secretion needle assembly. Also required for cytotoxicity by influencing PscF/SctF levels. The polypeptide is Type 3 secretion system chaperone PscG (pscG) (Pseudomonas aeruginosa (strain ATCC 15692 / DSM 22644 / CIP 104116 / JCM 14847 / LMG 12228 / 1C / PRS 101 / PAO1)).